The primary structure comprises 553 residues: uncharacterized protein (553 aa).

Transmembrane regions (helical) follow at residues 6-26 and 524-544; these read IKIF…QVDA and SYWI…GYVF.

The protein to M.jannaschii MJ0795 and MJ1506.

The protein resides in the cell membrane. This is an uncharacterized protein from Methanocaldococcus jannaschii (strain ATCC 43067 / DSM 2661 / JAL-1 / JCM 10045 / NBRC 100440) (Methanococcus jannaschii).